A 333-amino-acid polypeptide reads, in one-letter code: Ribose-phosphate pyrophosphokinase (333 aa).

58–60 (DGE) lines the ATP pocket. Mg(2+) contacts are provided by H151 and D190. K214 is an active-site residue. Residues R216, D240, and 244–248 (DTAGT) contribute to the D-ribose 5-phosphate site.

This sequence belongs to the ribose-phosphate pyrophosphokinase family. Class I subfamily. In terms of assembly, homohexamer. Mg(2+) is required as a cofactor.

It localises to the cytoplasm. It catalyses the reaction D-ribose 5-phosphate + ATP = 5-phospho-alpha-D-ribose 1-diphosphate + AMP + H(+). It functions in the pathway metabolic intermediate biosynthesis; 5-phospho-alpha-D-ribose 1-diphosphate biosynthesis; 5-phospho-alpha-D-ribose 1-diphosphate from D-ribose 5-phosphate (route I): step 1/1. Its function is as follows. Involved in the biosynthesis of the central metabolite phospho-alpha-D-ribosyl-1-pyrophosphate (PRPP) via the transfer of pyrophosphoryl group from ATP to 1-hydroxyl of ribose-5-phosphate (Rib-5-P). The chain is Ribose-phosphate pyrophosphokinase from Synechocystis sp. (strain ATCC 27184 / PCC 6803 / Kazusa).